We begin with the raw amino-acid sequence, 121 residues long: Small ribosomal subunit protein uS13 (121 aa).

Positions 90–121 (RHRRGLPVRGQHTKNNARTRKGKKVSIAGRKK) are disordered.

The protein belongs to the universal ribosomal protein uS13 family. In terms of assembly, part of the 30S ribosomal subunit. Forms a loose heterodimer with protein S19. Forms two bridges to the 50S subunit in the 70S ribosome.

Its function is as follows. Located at the top of the head of the 30S subunit, it contacts several helices of the 16S rRNA. In the 70S ribosome it contacts the 23S rRNA (bridge B1a) and protein L5 of the 50S subunit (bridge B1b), connecting the 2 subunits; these bridges are implicated in subunit movement. Contacts the tRNAs in the A and P-sites. This Lactiplantibacillus plantarum (strain ATCC BAA-793 / NCIMB 8826 / WCFS1) (Lactobacillus plantarum) protein is Small ribosomal subunit protein uS13.